We begin with the raw amino-acid sequence, 474 residues long: Glutamate--tRNA ligase 1 (474 aa).

Residues 10-20 (PSPTGFLHIGG) carry the 'HIGH' region motif. Residues 239–243 (KLSKR) carry the 'KMSKS' region motif. Residue K242 participates in ATP binding.

This sequence belongs to the class-I aminoacyl-tRNA synthetase family. Glutamate--tRNA ligase type 1 subfamily. In terms of assembly, monomer.

It is found in the cytoplasm. The enzyme catalyses tRNA(Glu) + L-glutamate + ATP = L-glutamyl-tRNA(Glu) + AMP + diphosphate. Its function is as follows. Catalyzes the attachment of glutamate to tRNA(Glu) in a two-step reaction: glutamate is first activated by ATP to form Glu-AMP and then transferred to the acceptor end of tRNA(Glu). The chain is Glutamate--tRNA ligase 1 from Methylobacterium sp. (strain 4-46).